Reading from the N-terminus, the 309-residue chain is Porphobilinogen deaminase (309 aa).

The residue at position 241 (Cys241) is an S-(dipyrrolylmethanemethyl)cysteine.

This sequence belongs to the HMBS family. As to quaternary structure, monomer. Dipyrromethane is required as a cofactor.

It catalyses the reaction 4 porphobilinogen + H2O = hydroxymethylbilane + 4 NH4(+). The protein operates within porphyrin-containing compound metabolism; protoporphyrin-IX biosynthesis; coproporphyrinogen-III from 5-aminolevulinate: step 2/4. Tetrapolymerization of the monopyrrole PBG into the hydroxymethylbilane pre-uroporphyrinogen in several discrete steps. This chain is Porphobilinogen deaminase, found in Campylobacter concisus (strain 13826).